The following is a 289-amino-acid chain: ATP synthase gamma chain (289 aa).

Belongs to the ATPase gamma chain family. As to quaternary structure, F-type ATPases have 2 components, CF(1) - the catalytic core - and CF(0) - the membrane proton channel. CF(1) has five subunits: alpha(3), beta(3), gamma(1), delta(1), epsilon(1). CF(0) has three main subunits: a, b and c.

Its subcellular location is the cell inner membrane. Its function is as follows. Produces ATP from ADP in the presence of a proton gradient across the membrane. The gamma chain is believed to be important in regulating ATPase activity and the flow of protons through the CF(0) complex. The sequence is that of ATP synthase gamma chain from Azobacteroides pseudotrichonymphae genomovar. CFP2.